A 413-amino-acid chain; its full sequence is L-cysteine:1D-myo-inositol 2-amino-2-deoxy-alpha-D-glucopyranoside ligase (413 aa).

The segment at 1-21 (MQSWSDTALPSVPGQGPPLRL) is disordered. C43 lines the Zn(2+) pocket. L-cysteinyl-5'-AMP contacts are provided by residues 43–46 (CGIT), T58, and 81–83 (NVT). Residues 45–55 (ITPYDATHLGH) carry the 'HIGH' region motif. Positions 187-192 (ERGGDP) match the 'ERGGDP' region motif. W227 serves as a coordination point for L-cysteinyl-5'-AMP. C231 serves as a coordination point for Zn(2+). 249 to 251 (GSD) is an L-cysteinyl-5'-AMP binding site. H256 serves as a coordination point for Zn(2+). I283 is a binding site for L-cysteinyl-5'-AMP. The 'KMSKS' region motif lies at 289-293 (KMSKS).

The protein belongs to the class-I aminoacyl-tRNA synthetase family. MshC subfamily. As to quaternary structure, monomer. Zn(2+) is required as a cofactor.

It carries out the reaction 1D-myo-inositol 2-amino-2-deoxy-alpha-D-glucopyranoside + L-cysteine + ATP = 1D-myo-inositol 2-(L-cysteinylamino)-2-deoxy-alpha-D-glucopyranoside + AMP + diphosphate + H(+). In terms of biological role, catalyzes the ATP-dependent condensation of GlcN-Ins and L-cysteine to form L-Cys-GlcN-Ins. The sequence is that of L-cysteine:1D-myo-inositol 2-amino-2-deoxy-alpha-D-glucopyranoside ligase from Rhodococcus erythropolis (strain PR4 / NBRC 100887).